Reading from the N-terminus, the 496-residue chain is E3 ubiquitin-protein ligase CBL-C (496 aa).

Residues 7–144 (PRGWQRGEPR…SALFPAGKYC (138 aa)) are 4H. The region spanning 7–320 (PRGWQRGEPR…GKKHNPDLTE (314 aa)) is the Cbl-PTB domain. An EF-hand-like region spans residues 145–217 (GHLYQLTKGS…FEFDVFTRLF (73 aa)). Ca(2+) contacts are provided by Asp198, Thr200, Asn202, and Glu209. Residues 218–320 (QPWPTLLRNW…GKKHNPDLTE (103 aa)) form an SH2-like region. Arg263 contacts 4-O-phospho-L-tyrosine. The linker stretch occupies residues 321-349 (LCRVEPYQRIQVSEEQLLLYQAMNSTFQL). Tyr340 carries the phosphotyrosine; by SRC modification. The RING-type zinc-finger motif lies at 350 to 389 (CKICAERDKDVRIEPCGHLLCSCCLAAWQDSDSQTCPFCR). Residues 350 to 494 (CKICAERDKD…RPRAREEATE (145 aa)) form an interaction with RET region. The segment at 432–453 (PVIPSAPSLLPEDQFPQGPQDK) is disordered.

In terms of assembly, interacts with Ubiquitin-conjugating enzyme E2 UBE2D2 and UBE2D3. Isoform 1 interacts with EGFR (tyrosine phosphorylated). Interacts with the SH3 domain proteins LYN and CRK. Interacts (via RING-type zinc finger) with TGFB1I1 (via LIM zinc-binding domain 2); the interaction is direct and enhances the E3 activity. Interacts directly with RET (inactive) and CD2AP; dissociates from RET upon RET activation by GDNF which also increases the interaction with CD2AP suggesting dissociation as CBLC:CD2AP complex. Interacts with SRC; the interaction is enhanced when SRC is phosphorylated at 'Tyr-419'. Post-translationally, phosphorylated on tyrosines by EGFR. Phosphorylated on multiple tyrosine residues by SRC. Isoform 1, but not isoform 2, is phosphorylated on tyrosines by EGFR. In terms of processing, autoubiquitinated, when phosphorylated at Tyr-340. As to expression, widely expressed in tissues, where the expression is restricted to epithelial cells (at protein level).

It carries out the reaction S-ubiquitinyl-[E2 ubiquitin-conjugating enzyme]-L-cysteine + [acceptor protein]-L-lysine = [E2 ubiquitin-conjugating enzyme]-L-cysteine + N(6)-ubiquitinyl-[acceptor protein]-L-lysine.. Phosphorylation at Tyr-340 is necessary and sufficient for the activation of E3 activity. In terms of biological role, acts as an E3 ubiquitin-protein ligase, which accepts ubiquitin from specific E2 ubiquitin-conjugating enzymes, and then transfers it to substrates promoting their degradation by the proteasome. Functionally coupled with the E2 ubiquitin-protein ligases UB2D1, UB2D2 and UB2D3. Regulator of EGFR mediated signal transduction; upon EGF activation, ubiquitinates EGFR. Isoform 1, but not isoform 2, inhibits EGF stimulated MAPK1 activation. Promotes ubiquitination of SRC phosphorylated at 'Tyr-424', has the highest ubiquitin ligase activity among CBL family proteins. In collaboration with CD2AP may act as regulatory checkpoint for Ret signaling by modulating the rate of RET degradation after ligand activation; CD2AP converts it from an inhibitor to a promoter of RET degradation; the function limits the potency of GDNF on neuronal survival. In Mus musculus (Mouse), this protein is E3 ubiquitin-protein ligase CBL-C (Cblc).